The primary structure comprises 226 residues: Ribosome maturation factor RimP (226 aa).

A disordered region spans residues 190-226 (VFPDTTRPQPGGKTGQRKKAQPKKPARGGAPHDDTTD). Residues 204 to 215 (GQRKKAQPKKPA) are compositionally biased toward basic residues.

The protein belongs to the RimP family.

The protein localises to the cytoplasm. Required for maturation of 30S ribosomal subunits. This is Ribosome maturation factor RimP from Nitratidesulfovibrio vulgaris (strain DSM 19637 / Miyazaki F) (Desulfovibrio vulgaris).